Reading from the N-terminus, the 269-residue chain is Putative carbamate hydrolase RutD (269 aa).

Residues Val26 to Asn144 enclose the AB hydrolase-1 domain.

This sequence belongs to the AB hydrolase superfamily. Hydrolase RutD family.

The catalysed reaction is carbamate + 2 H(+) = NH4(+) + CO2. Involved in pyrimidine catabolism. May facilitate the hydrolysis of carbamate, a reaction that can also occur spontaneously. The sequence is that of Putative carbamate hydrolase RutD from Caulobacter vibrioides (strain ATCC 19089 / CIP 103742 / CB 15) (Caulobacter crescentus).